The sequence spans 213 residues: Ergothioneine transport ATP-binding protein EgtV (213 aa).

Residues 5–212 (VTIENVSFNY…ATKTLEIKAL (208 aa)) enclose the ABC transporter domain. 37–44 (GESGSGKS) lines the ATP pocket.

This sequence belongs to the ABC transporter superfamily. As to quaternary structure, the complex is composed of two ATP-binding proteins (EgtV) and two transmembrane proteins (EgtU).

The protein resides in the cell inner membrane. It carries out the reaction ergothioneine(out) + ATP + H2O = ergothioneine(in) + ADP + phosphate + H(+). Its function is as follows. Part of the ABC transporter complex EgtUV involved in the uptake of ergothioneine (EGT), a natural low-molecular weight (LMW) thiol antioxidant which protects H.pylori against bleach stress. Responsible for energy coupling to the transport system. The sequence is that of Ergothioneine transport ATP-binding protein EgtV from Helicobacter pylori (strain G27).